Reading from the N-terminus, the 421-residue chain is CaM kinase-like vesicle-associated protein (421 aa).

Residues 24–284 enclose the Protein kinase domain; sequence YDLGQVVKSE…AQEAIAHEWI (261 aa). The interval 326–421 is disordered; that stretch reads ASEQGDTGAS…PQMLPQRKGY (96 aa). Composition is skewed to low complexity over residues 330 to 340 and 390 to 406; these read GDTGASGLAAG and QQQA…QQAR.

This sequence belongs to the protein kinase superfamily. CAMK Ser/Thr protein kinase family. Interacts with calmodulin, in the presence of calcium. The cofactor is Ca(2+). In terms of tissue distribution, ubiquitously expressed.

Its subcellular location is the cytoplasmic vesicle membrane. Does not appear to have detectable kinase activity. The polypeptide is CaM kinase-like vesicle-associated protein (camkv) (Takifugu rubripes (Japanese pufferfish)).